A 408-amino-acid polypeptide reads, in one-letter code: Na(+)-translocating NADH-quinone reductase subunit F (408 aa).

The chain crosses the membrane as a helical span at residues 6–26; it reads IILGVVMFTAIVLALVAIILA. One can recognise a 2Fe-2S ferredoxin-type domain in the interval 35 to 127; that stretch reads GDVTIRINGE…DMDVEVPEEV (93 aa). The [2Fe-2S] cluster site is built by Cys-70, Cys-76, Cys-79, and Cys-111. The 141-residue stretch at 130 to 270 folds into the FAD-binding FR-type domain; it reads VKAWECTVES…YGPFGEFFAK (141 aa).

This sequence belongs to the NqrF family. As to quaternary structure, composed of six subunits; NqrA, NqrB, NqrC, NqrD, NqrE and NqrF. It depends on [2Fe-2S] cluster as a cofactor. Requires FAD as cofactor.

It is found in the cell inner membrane. It catalyses the reaction a ubiquinone + n Na(+)(in) + NADH + H(+) = a ubiquinol + n Na(+)(out) + NAD(+). Its function is as follows. NQR complex catalyzes the reduction of ubiquinone-1 to ubiquinol by two successive reactions, coupled with the transport of Na(+) ions from the cytoplasm to the periplasm. The first step is catalyzed by NqrF, which accepts electrons from NADH and reduces ubiquinone-1 to ubisemiquinone by a one-electron transfer pathway. This is Na(+)-translocating NADH-quinone reductase subunit F from Marinomonas sp. (strain MWYL1).